The primary structure comprises 354 residues: Histidinol-phosphate aminotransferase (354 aa).

Residue lysine 222 is modified to N6-(pyridoxal phosphate)lysine.

The protein belongs to the class-II pyridoxal-phosphate-dependent aminotransferase family. Histidinol-phosphate aminotransferase subfamily. As to quaternary structure, homodimer. Pyridoxal 5'-phosphate serves as cofactor.

It catalyses the reaction L-histidinol phosphate + 2-oxoglutarate = 3-(imidazol-4-yl)-2-oxopropyl phosphate + L-glutamate. It functions in the pathway amino-acid biosynthesis; L-histidine biosynthesis; L-histidine from 5-phospho-alpha-D-ribose 1-diphosphate: step 7/9. In Staphylococcus carnosus (strain TM300), this protein is Histidinol-phosphate aminotransferase.